Here is a 542-residue protein sequence, read N- to C-terminus: GPI alpha-1,2-mannosyltransferase 3 (542 aa).

The disordered stretch occupies residues methionine 1 to glutamine 36. 8 consecutive transmembrane segments (helical) span residues leucine 52–valine 72, valine 125–isoleucine 145, leucine 213–phenylalanine 233, histidine 244–isoleucine 264, glycine 304–proline 324, leucine 327–lysine 347, phenylalanine 351–lysine 371, and alanine 376–histidine 396. N-linked (GlcNAc...) asparagine glycosylation is present at asparagine 480.

This sequence belongs to the glycosyltransferase 22 family. PIGB subfamily.

The protein resides in the endoplasmic reticulum membrane. The protein operates within glycolipid biosynthesis; glycosylphosphatidylinositol-anchor biosynthesis. Functionally, alpha-1,2-mannosyltransferase that catalyzes the transfer of the third mannose, via an alpha-1,2 bond, from a dolichol-phosphate-mannose (Dol-P-Man) to an alpha-D-Man-(1-&gt;6)-2-PEtn-alpha-D-Man-(1-&gt;4)-alpha-D-GlcN-(1-&gt;6)-(1-radyl,2-acyl-sn-glycero-3-phospho)-2-acyl-inositol intermediate to generate an alpha-D-Man-(1-&gt;2)-alpha-D-Man-(1-&gt;6)-2-PEtn-alpha-D-Man-(1-&gt;4)-alpha-D-GlcN-(1-&gt;6)-(1-radyl,2-acyl-sn-glycero-3-phospho)-2-acyl-inositol (also termed H6) and participates in the nineth step of the glycosylphosphatidylinositol-anchor biosynthesis. May also add the third mannose to an alpha-D-Man-(1-&gt;6)-alpha-D-Man-(1-&gt;4)-alpha-D-GlcN-(1-&gt;6)-(1-radyl,2-acyl-sn-glycero-3-phospho)-2-acyl-inositol (also termed H3) intermediate generating an alpha-D-Man-(1-&gt;2)-alpha-D-Man-(1-&gt;6)-alpha-D-Man-(1-&gt;4)-alpha-D-GlcN-(1-&gt;6)-(1-radyl,2-acyl-sn-glycero-3-phospho)-2-acyl-inositol (also termed H4). The polypeptide is GPI alpha-1,2-mannosyltransferase 3 (Mus musculus (Mouse)).